The chain runs to 488 residues: Ammonium transporter Rh type C-like 2 (488 aa).

Residues 1-21 are Cytoplasmic-facing; that stretch reads MGNCFGSRGICDRPKNTNIRL. A helical membrane pass occupies residues 22-42; that stretch reads SLPAVCFVWQVSMIILFGVFV. Over 43–73 the chain is Extracellular; it reads RYNEEADTNWVYTKKEKNITSDIENDFYFRY. The N-linked (GlcNAc...) asparagine glycan is linked to N60. The chain crosses the membrane as a helical span at residues 74–94; it reads PSFQDVHVMIFVGFGFLMTFL. The Cytoplasmic portion of the chain corresponds to 95-98; it reads KRYS. The helical transmembrane segment at 99-119 threads the bilayer; sequence FGAVGFNFLIAAFGLQWALLM. Topologically, residues 120 to 139 are extracellular; it reads QGWFSPLGDDGKIKIGIENL. A helical membrane pass occupies residues 140-160; sequence INADFCVASCLIAYGAVLGKV. Over 161 to 162 the chain is Cytoplasmic; sequence SP. The helical transmembrane segment at 163–183 threads the bilayer; the sequence is VQLLVMTLFGITLYAVEEFII. The Extracellular segment spans residues 184-191; it reads LRVLNAKD. Residues 192–214 form a helical membrane-spanning segment; it reads AGGSMVIHTFGAYYGLSISRVLY. Over 215 to 232 the chain is Cytoplasmic; sequence RPNLNKSKHMNGSVYHSD. A helical transmembrane segment spans residues 233–253; sequence VFAMIGTLFLWMFWPSFNSAI. The Extracellular segment spans residues 254-264; sequence CNHGDGQHRAA. Residues 265-285 traverse the membrane as a helical segment; sequence INTYLALASTVLTTVAISSMF. Residues 286–298 lie on the Cytoplasmic side of the membrane; sequence EKTGKLDMVHIQN. Residues 299 to 319 form a helical membrane-spanning segment; the sequence is STLAGGVAVGTAAEFMLMPYG. Position 320 (S320) is a topological domain, extracellular. A helical transmembrane segment spans residues 321–341; sequence LIVGFFCGIISTLGYIYLTPF. Over 342–356 the chain is Cytoplasmic; that stretch reads LEERLKIQDTCGIHN. The chain crosses the membrane as a helical span at residues 357–377; that stretch reads LHAMPGVIGGIVGAISAAAAS. The Extracellular portion of the chain corresponds to 378–409; the sequence is KEVYGDLGLKNIFSIEGSNVTRLPTVQGGYQA. A helical membrane pass occupies residues 410–430; it reads AALCVALCFGIGGGTFVGLVL. Residues 431-488 lie on the Cytoplasmic side of the membrane; it reads KLPIWGDPADEHCFNDEMYWEVPEDEESIIPPVLSYNNHMIPNNKHEEMRETNFAEQS.

This sequence belongs to the ammonium transporter (TC 2.A.49) family. Rh subfamily. In terms of assembly, homotrimer. At larval stages, expressed only in the yolk sac and gill. However, the kidney and the gills are major sites of expression in adults.

It is found in the apical cell membrane. Its function is as follows. Functions as an ammonia transporter. May play a role in the elimination of ammonia in the gill. This Danio rerio (Zebrafish) protein is Ammonium transporter Rh type C-like 2 (rhcgl2).